The sequence spans 200 residues: HTH-type transcriptional regulator Hpr (200 aa).

One can recognise an HTH marR-type domain in the interval 13–157; the sequence is AMLFSQRIAQ…MMCIVRNIYG (145 aa). A DNA-binding region (H-T-H motif) is located at residues 63 to 86; the sequence is ISEIAKFGVMHVSTAFNFSKKLEE.

Homodimer.

In terms of biological role, negative regulator of protease production and sporulation. This is HTH-type transcriptional regulator Hpr from Geobacillus thermodenitrificans (strain NG80-2).